The chain runs to 358 residues: UDP-N-acetylglucosamine--N-acetylmuramyl-(pentapeptide) pyrophosphoryl-undecaprenol N-acetylglucosamine transferase (358 aa).

UDP-N-acetyl-alpha-D-glucosamine is bound by residues 11-13, asparagine 120, arginine 161, serine 188, and glutamine 282; that span reads TGG.

The protein belongs to the glycosyltransferase 28 family. MurG subfamily.

It localises to the cell inner membrane. It catalyses the reaction di-trans,octa-cis-undecaprenyl diphospho-N-acetyl-alpha-D-muramoyl-L-alanyl-D-glutamyl-meso-2,6-diaminopimeloyl-D-alanyl-D-alanine + UDP-N-acetyl-alpha-D-glucosamine = di-trans,octa-cis-undecaprenyl diphospho-[N-acetyl-alpha-D-glucosaminyl-(1-&gt;4)]-N-acetyl-alpha-D-muramoyl-L-alanyl-D-glutamyl-meso-2,6-diaminopimeloyl-D-alanyl-D-alanine + UDP + H(+). It functions in the pathway cell wall biogenesis; peptidoglycan biosynthesis. Functionally, cell wall formation. Catalyzes the transfer of a GlcNAc subunit on undecaprenyl-pyrophosphoryl-MurNAc-pentapeptide (lipid intermediate I) to form undecaprenyl-pyrophosphoryl-MurNAc-(pentapeptide)GlcNAc (lipid intermediate II). The polypeptide is UDP-N-acetylglucosamine--N-acetylmuramyl-(pentapeptide) pyrophosphoryl-undecaprenol N-acetylglucosamine transferase (Parasynechococcus marenigrum (strain WH8102)).